A 314-amino-acid chain; its full sequence is CBASS oligonucleotide cyclase CdnC (314 aa).

Lys60 provides a ligand contact to ATP. Residues Asp73 and Asp75 each coordinate Mg(2+). ATP is bound by residues Asp75, Lys186, 197–199, and Asn263; that span reads KSF.

The protein belongs to the CD-NTase family. C01 subfamily. In terms of assembly, forms complexes with Cap7 with 1:1 and 2:2 stoichimetry, and a 1:1:6 CdnC:Cap7:Cap6 complex. The cofactor is Mg(2+).

In terms of biological role, cyclic nucleotide synthase (second messenger synthase) of a CBASS antivirus system. CBASS (cyclic oligonucleotide-based antiphage signaling system) provides immunity against bacteriophage. The CD-NTase protein synthesizes cyclic nucleotides in response to infection; these serve as specific second messenger signals. The signals activate a diverse range of effectors, leading to bacterial cell death and thus abortive phage infection. A type III CBASS system. Expression of this CBASS system (Cap18-Cap6-Cap7-CdnC-CapW-Cap17) in a susceptible E.coli (strain MG1655) confers resistance to bacteriophage P1. Probable cyclic nucleotide synthase that upon activation catalyzes the synthesis of a cyclic nucleotide. A cyclase activity for this enzyme was not identified in. This Escherichia coli (strain KTE188) protein is CBASS oligonucleotide cyclase CdnC.